Consider the following 399-residue polypeptide: Carbamoyl phosphate synthase small chain (399 aa).

The tract at residues 1-204 is CPSase; the sequence is MTKTTLSSDP…WNKGYTINNE (204 aa). L-glutamine-binding residues include Ser60, Gly256, and Gly258. The 189-residue stretch at 208–396 folds into the Glutamine amidotransferase type-1 domain; it reads HIVAIDYGIK…HDLIVNYREQ (189 aa). The Nucleophile role is filled by Cys285. Positions 286, 289, 327, 329, and 330 each coordinate L-glutamine. Active-site residues include His369 and Glu371.

The protein belongs to the CarA family. Composed of two chains; the small (or glutamine) chain promotes the hydrolysis of glutamine to ammonia, which is used by the large (or ammonia) chain to synthesize carbamoyl phosphate. Tetramer of heterodimers (alpha,beta)4.

The enzyme catalyses hydrogencarbonate + L-glutamine + 2 ATP + H2O = carbamoyl phosphate + L-glutamate + 2 ADP + phosphate + 2 H(+). It carries out the reaction L-glutamine + H2O = L-glutamate + NH4(+). The protein operates within amino-acid biosynthesis; L-arginine biosynthesis; carbamoyl phosphate from bicarbonate: step 1/1. Its pathway is pyrimidine metabolism; UMP biosynthesis via de novo pathway; (S)-dihydroorotate from bicarbonate: step 1/3. Small subunit of the glutamine-dependent carbamoyl phosphate synthetase (CPSase). CPSase catalyzes the formation of carbamoyl phosphate from the ammonia moiety of glutamine, carbonate, and phosphate donated by ATP, constituting the first step of 2 biosynthetic pathways, one leading to arginine and/or urea and the other to pyrimidine nucleotides. The small subunit (glutamine amidotransferase) binds and cleaves glutamine to supply the large subunit with the substrate ammonia. This Bartonella bacilliformis (strain ATCC 35685 / KC583 / Herrer 020/F12,63) protein is Carbamoyl phosphate synthase small chain.